The following is a 54-amino-acid chain: uncharacterized protein (54 aa).

It to B.subtilis XkdX.

This is an uncharacterized protein from Bacillus subtilis (strain 168).